The sequence spans 143 residues: Nucleoside diphosphate kinase (143 aa).

ATP contacts are provided by Lys11, Phe59, Arg87, Thr93, Arg104, and Asn114. His117 functions as the Pros-phosphohistidine intermediate in the catalytic mechanism.

The protein belongs to the NDK family. Homotetramer. Mg(2+) serves as cofactor.

Its subcellular location is the cytoplasm. The enzyme catalyses a 2'-deoxyribonucleoside 5'-diphosphate + ATP = a 2'-deoxyribonucleoside 5'-triphosphate + ADP. It catalyses the reaction a ribonucleoside 5'-diphosphate + ATP = a ribonucleoside 5'-triphosphate + ADP. Its function is as follows. Major role in the synthesis of nucleoside triphosphates other than ATP. The ATP gamma phosphate is transferred to the NDP beta phosphate via a ping-pong mechanism, using a phosphorylated active-site intermediate. This Tolumonas auensis (strain DSM 9187 / NBRC 110442 / TA 4) protein is Nucleoside diphosphate kinase.